The chain runs to 875 residues: Phosphoenolpyruvate carboxylase (875 aa).

Catalysis depends on residues His137 and Lys542.

This sequence belongs to the PEPCase type 1 family. The cofactor is Mg(2+).

The catalysed reaction is oxaloacetate + phosphate = phosphoenolpyruvate + hydrogencarbonate. Forms oxaloacetate, a four-carbon dicarboxylic acid source for the tricarboxylic acid cycle. This is Phosphoenolpyruvate carboxylase from Pseudomonas putida (strain GB-1).